Here is a 111-residue protein sequence, read N- to C-terminus: Large ribosomal subunit protein uL22 (111 aa).

This sequence belongs to the universal ribosomal protein uL22 family. Part of the 50S ribosomal subunit.

Functionally, this protein binds specifically to 23S rRNA; its binding is stimulated by other ribosomal proteins, e.g. L4, L17, and L20. It is important during the early stages of 50S assembly. It makes multiple contacts with different domains of the 23S rRNA in the assembled 50S subunit and ribosome. The globular domain of the protein is located near the polypeptide exit tunnel on the outside of the subunit, while an extended beta-hairpin is found that lines the wall of the exit tunnel in the center of the 70S ribosome. The polypeptide is Large ribosomal subunit protein uL22 (Thermoanaerobacter pseudethanolicus (strain ATCC 33223 / 39E) (Clostridium thermohydrosulfuricum)).